The sequence spans 201 residues: 3-isopropylmalate dehydratase small subunit (201 aa).

This sequence belongs to the LeuD family. LeuD type 1 subfamily. Heterodimer of LeuC and LeuD.

The enzyme catalyses (2R,3S)-3-isopropylmalate = (2S)-2-isopropylmalate. It functions in the pathway amino-acid biosynthesis; L-leucine biosynthesis; L-leucine from 3-methyl-2-oxobutanoate: step 2/4. Catalyzes the isomerization between 2-isopropylmalate and 3-isopropylmalate, via the formation of 2-isopropylmaleate. This chain is 3-isopropylmalate dehydratase small subunit, found in Shewanella pealeana (strain ATCC 700345 / ANG-SQ1).